Reading from the N-terminus, the 337-residue chain is uncharacterized protein (337 aa).

Positions 248 to 276 (NELKAETTIQVLREQLRQEKKLKEQVLSL) form a coiled coil. The segment at 285 to 337 (GGRGEEFGKPDETPSSASVGDDNFPSSTNHTFEARRRPSSLSSGGALKPSKIL) is disordered. Basic and acidic residues predominate over residues 287 to 296 (RGEEFGKPDE). Positions 297–315 (TPSSASVGDDNFPSSTNHT) are enriched in polar residues.

This is an uncharacterized protein from Invertebrate iridescent virus 3 (IIV-3).